A 71-amino-acid chain; its full sequence is Prophage lysis protein S homolog EssD (71 aa).

The protein belongs to the lambda phage S protein family.

This Escherichia coli (strain K12) protein is Prophage lysis protein S homolog EssD (essD).